A 301-amino-acid chain; its full sequence is Glutamyl-Q tRNA(Asp) synthetase (301 aa).

L-glutamate-binding positions include 9-13 and Glu-45; that span reads RFAPS. The 'HIGH' region motif lies at 12 to 22; the sequence is PSPTGPLHLGS. Positions 101, 103, 121, and 125 each coordinate Zn(2+). 2 residues coordinate L-glutamate: Tyr-179 and Arg-197. The short motif at 235–239 is the 'KMSKS' region element; it reads KLSKQ. Lys-238 provides a ligand contact to ATP.

Belongs to the class-I aminoacyl-tRNA synthetase family. GluQ subfamily. The cofactor is Zn(2+).

Its function is as follows. Catalyzes the tRNA-independent activation of glutamate in presence of ATP and the subsequent transfer of glutamate onto a tRNA(Asp). Glutamate is transferred on the 2-amino-5-(4,5-dihydroxy-2-cyclopenten-1-yl) moiety of the queuosine in the wobble position of the QUC anticodon. The sequence is that of Glutamyl-Q tRNA(Asp) synthetase from Thiobacillus denitrificans (strain ATCC 25259 / T1).